Reading from the N-terminus, the 743-residue chain is Cap-specific mRNA (nucleoside-2'-O-)-methyltransferase 2 (743 aa).

The Adrift-type SAM-dependent 2'-O-MTase domain maps to 113–326 (ELCTQAWAKF…LYIVCLDYQA (214 aa)). Lysine 121 is a catalytic residue. S-adenosyl-L-methionine-binding residues include glycine 152, tryptophan 171, and aspartate 239. Aspartate 239 is a catalytic residue. Catalysis depends on lysine 279, which acts as the Proton acceptor.

It is found in the nucleus. Its subcellular location is the cytoplasm. The catalysed reaction is a 5'-end (N(7)-methyl 5'-triphosphoguanosine)-(2'-O-methyl-ribonucleoside)-(ribonucleotide) in mRNA + S-adenosyl-L-methionine = a 5'-end (N(7)-methyl 5'-triphosphoguanosine)-(2'-O-methyl-ribonucleoside)-(2'-O-methyl-ribonucleotide) in mRNA + S-adenosyl-L-homocysteine + H(+). S-adenosyl-L-methionine-dependent methyltransferase that mediates mRNA cap2 2'-O-ribose methylation to the 5'-cap structure of mRNAs. Methylates the ribose of the second nucleotide of a m(7)GpppG-capped mRNA and small nuclear RNA (snRNA) (cap0) to produce m(7)GpppRmpNm (cap2). This is Cap-specific mRNA (nucleoside-2'-O-)-methyltransferase 2 (cmtr2) from Danio rerio (Zebrafish).